The primary structure comprises 433 residues: F-box/kelch-repeat protein At1g24800 (433 aa).

Residues 23–71 (TSMCDLPPKLVGEKILTRIPITSLRAVRSTCKLWNALTKDRVLGKAAAQ) enclose the F-box domain. Kelch repeat units lie at residues 170-216 (HKIL…LYGV) and 286-337 (VLYH…RFDN).

The sequence is that of F-box/kelch-repeat protein At1g24800 from Arabidopsis thaliana (Mouse-ear cress).